The primary structure comprises 440 residues: APO protein 2, chloroplastic (440 aa).

Residues 1-62 constitute a chloroplast transit peptide; it reads MSITYSAISF…SLQLNSRVVL (62 aa). The span at 106 to 115 shows a compositional bias: basic and acidic residues; that stretch reads ARERVKNNKD. The interval 106-126 is disordered; that stretch reads ARERVKNNKDKPKRPLPPPKN. 2 consecutive APO domains span residues 162–247 and 332–417; these read ACGW…EIPE and VCGY…VVPE.

Belongs to the APO family.

It is found in the plastid. It localises to the chloroplast. In terms of biological role, may be involved in the stable assembly of several 4Fe-4S cluster-containing complexes of chloroplasts. The protein is APO protein 2, chloroplastic (APO2) of Arabidopsis thaliana (Mouse-ear cress).